A 156-amino-acid chain; its full sequence is MSKNVSRTVEQLAEPIVRELHLELVEVEYKKEGPNWYLRVFIDADRGVNLDDCEAVSEKLSEVLDEVDPIKEAYFLEVSSPGAERPLKKEADVKKAVGKGVYVTTYEPIDGQKAFEGVLVSFEDATLVIEGKNKTRTVTYTVPYAKVANARLSILL.

The protein belongs to the RimP family.

It localises to the cytoplasm. Required for maturation of 30S ribosomal subunits. This chain is Ribosome maturation factor RimP, found in Shouchella clausii (strain KSM-K16) (Alkalihalobacillus clausii).